The chain runs to 390 residues: Protein-glutamate methylesterase/protein-glutamine glutaminase (390 aa).

Positions 4-121 (RALVVDDSGF…SGDMEQVKRQ (118 aa)) constitute a Response regulatory domain. The residue at position 55 (Asp55) is a 4-aspartylphosphate. The segment at 130-198 (GGGRGAPAGR…AAPAPERGQR (69 aa)) is disordered. Composition is skewed to low complexity over residues 136–148 (PAGR…APVD) and 179–193 (EAPV…APAP). One can recognise a CheB-type methylesterase domain in the interval 201–390 (PGALRLVVIG…QVGEELAKLR (190 aa)). Catalysis depends on residues Ser212, His239, and Asp335.

Belongs to the CheB family. Post-translationally, phosphorylated by CheA. Phosphorylation of the N-terminal regulatory domain activates the methylesterase activity.

It localises to the cytoplasm. The catalysed reaction is [protein]-L-glutamate 5-O-methyl ester + H2O = L-glutamyl-[protein] + methanol + H(+). It carries out the reaction L-glutaminyl-[protein] + H2O = L-glutamyl-[protein] + NH4(+). Involved in chemotaxis. Part of a chemotaxis signal transduction system that modulates chemotaxis in response to various stimuli. Catalyzes the demethylation of specific methylglutamate residues introduced into the chemoreceptors (methyl-accepting chemotaxis proteins or MCP) by CheR. Also mediates the irreversible deamidation of specific glutamine residues to glutamic acid. This chain is Protein-glutamate methylesterase/protein-glutamine glutaminase, found in Alkalilimnicola ehrlichii (strain ATCC BAA-1101 / DSM 17681 / MLHE-1).